We begin with the raw amino-acid sequence, 188 residues long: dCTP deaminase (188 aa).

DCTP is bound by residues 111-116 (KSTYAR), 135-137 (TLE), Q156, Y170, and Q180. The Proton donor/acceptor role is filled by E137.

It belongs to the dCTP deaminase family. Homotrimer.

The enzyme catalyses dCTP + H2O + H(+) = dUTP + NH4(+). Its pathway is pyrimidine metabolism; dUMP biosynthesis; dUMP from dCTP (dUTP route): step 1/2. Functionally, catalyzes the deamination of dCTP to dUTP. The protein is dCTP deaminase of Acidovorax sp. (strain JS42).